The primary structure comprises 502 residues: Glutamate--tRNA ligase (502 aa).

A 'HIGH' region motif is present at residues 12-22 (PSPTGYLHVGG). Residues 259–263 (KLSKR) carry the 'KMSKS' region motif. An ATP-binding site is contributed by K262.

Belongs to the class-I aminoacyl-tRNA synthetase family. Glutamate--tRNA ligase type 1 subfamily. In terms of assembly, monomer.

The protein localises to the cytoplasm. It carries out the reaction tRNA(Glu) + L-glutamate + ATP = L-glutamyl-tRNA(Glu) + AMP + diphosphate. Its function is as follows. Catalyzes the attachment of glutamate to tRNA(Glu) in a two-step reaction: glutamate is first activated by ATP to form Glu-AMP and then transferred to the acceptor end of tRNA(Glu). This chain is Glutamate--tRNA ligase, found in Chlorobium phaeobacteroides (strain DSM 266 / SMG 266 / 2430).